Here is an 862-residue protein sequence, read N- to C-terminus: DNA mismatch repair protein MutS (862 aa).

ATP is bound at residue 621–628 (GPNMGGKS).

The protein belongs to the DNA mismatch repair MutS family.

In terms of biological role, this protein is involved in the repair of mismatches in DNA. It is possible that it carries out the mismatch recognition step. This protein has a weak ATPase activity. This Vibrio cholerae serotype O1 (strain ATCC 39541 / Classical Ogawa 395 / O395) protein is DNA mismatch repair protein MutS.